The sequence spans 410 residues: Histidine--tRNA ligase (410 aa).

Belongs to the class-II aminoacyl-tRNA synthetase family. Homodimer.

The protein localises to the cytoplasm. The catalysed reaction is tRNA(His) + L-histidine + ATP = L-histidyl-tRNA(His) + AMP + diphosphate + H(+). The polypeptide is Histidine--tRNA ligase (Elusimicrobium minutum (strain Pei191)).